The following is a 214-amino-acid chain: Cytochrome c biogenesis ATP-binding export protein CcmA (214 aa).

Positions 4 to 214 (LAVDQLTVSR…FDHGFDGAFL (211 aa)) constitute an ABC transporter domain. 36–43 (GPNGIGKT) is an ATP binding site.

Belongs to the ABC transporter superfamily. CcmA exporter (TC 3.A.1.107) family. In terms of assembly, the complex is composed of two ATP-binding proteins (CcmA) and two transmembrane proteins (CcmB).

It localises to the cell inner membrane. The catalysed reaction is heme b(in) + ATP + H2O = heme b(out) + ADP + phosphate + H(+). Functionally, part of the ABC transporter complex CcmAB involved in the biogenesis of c-type cytochromes; once thought to export heme, this seems not to be the case, but its exact role is uncertain. Responsible for energy coupling to the transport system. The sequence is that of Cytochrome c biogenesis ATP-binding export protein CcmA from Rhodobacter capsulatus (strain ATCC BAA-309 / NBRC 16581 / SB1003).